Reading from the N-terminus, the 179-residue chain is ATP synthase subunit delta (179 aa).

This sequence belongs to the ATPase delta chain family. As to quaternary structure, F-type ATPases have 2 components, F(1) - the catalytic core - and F(0) - the membrane proton channel. F(1) has five subunits: alpha(3), beta(3), gamma(1), delta(1), epsilon(1). F(0) has three main subunits: a(1), b(2) and c(10-14). The alpha and beta chains form an alternating ring which encloses part of the gamma chain. F(1) is attached to F(0) by a central stalk formed by the gamma and epsilon chains, while a peripheral stalk is formed by the delta and b chains.

It is found in the cell inner membrane. In terms of biological role, f(1)F(0) ATP synthase produces ATP from ADP in the presence of a proton or sodium gradient. F-type ATPases consist of two structural domains, F(1) containing the extramembraneous catalytic core and F(0) containing the membrane proton channel, linked together by a central stalk and a peripheral stalk. During catalysis, ATP synthesis in the catalytic domain of F(1) is coupled via a rotary mechanism of the central stalk subunits to proton translocation. Its function is as follows. This protein is part of the stalk that links CF(0) to CF(1). It either transmits conformational changes from CF(0) to CF(1) or is implicated in proton conduction. This is ATP synthase subunit delta from Burkholderia thailandensis (strain ATCC 700388 / DSM 13276 / CCUG 48851 / CIP 106301 / E264).